The following is a 337-amino-acid chain: ERI1 exoribonuclease 3 (337 aa).

The 175-residue stretch at 146–320 folds into the Exonuclease domain; sequence FLVLDFEATC…DDCKNIANIM (175 aa). Mg(2+) contacts are provided by aspartate 150, glutamate 152, and aspartate 249. The Proton acceptor role is filled by glutamate 152. An AMP-binding site is contributed by glutamate 152. Histidine 307 functions as the Proton acceptor in the catalytic mechanism. AMP is bound at residue histidine 307. Aspartate 312 is a Mg(2+) binding site.

Interacts with PRNP. Requires Mg(2+) as cofactor.

The protein is ERI1 exoribonuclease 3 (ERI3) of Bos taurus (Bovine).